The primary structure comprises 397 residues: Probable peptidoglycan glycosyltransferase FtsW (397 aa).

Topologically, residues 1 to 30 are cytoplasmic; the sequence is MYGLEMLEKIKLEYDKWACLTPKNSLYDRT. The chain crosses the membrane as a helical span at residues 31–51; sequence LVWLFLSLLMIGFIMVTSASI. Residues 52-61 are Periplasmic-facing; that stretch reads PVSTRLNNDP. Residues 62–82 traverse the membrane as a helical segment; sequence FHFAIRDSIYLACSLLAFAFV. The Cytoplasmic segment spans residues 83-94; it reads VKIPMRNWEKYN. The helical transmembrane segment at 95–115 threads the bilayer; it reads VPLFLLSLLFLASVLIFGRSV. The Periplasmic portion of the chain corresponds to 116 to 126; sequence NGSIRWIQLGP. A helical membrane pass occupies residues 127-146; it reads INFQPAELSKLAIICYFSSF. Over 147–158 the chain is Cytoplasmic; it reads YVRKYDEMRNRS. A run of 2 helical transmembrane segments spans residues 159 to 179 and 180 to 200; these read ASVIRPMVILFLFSSLLLLQP and DLGSVVVLFVLTFTMLFIMGA. Position 201 (K201) is a topological domain, cytoplasmic. A helical transmembrane segment spans residues 202–222; the sequence is VMQFLLLIVTASVSFILLVLT. The Periplasmic portion of the chain corresponds to 223–280; the sequence is SEYRLKRVTSFLDPFADAYGDGFQLSNAQMAFGQGQLWGQGLGNSVQKLEYLPEAHTD. A helical membrane pass occupies residues 281 to 301; the sequence is FVMAVVAEEFGFIGIIFMVVL. The Cytoplasmic portion of the chain corresponds to 302 to 325; the sequence is LLCLSFRAIKISRDALKLEARFRG. Residues 326–346 form a helical membrane-spanning segment; the sequence is FFAFGVAIWVFLQGSVNLGVA. At 347 to 356 the chain is on the periplasmic side; it reads SGALPTKGLT. The chain crosses the membrane as a helical span at residues 357 to 377; that stretch reads FPLVSYGGSSLVIMSVAIAIL. The Cytoplasmic portion of the chain corresponds to 378-397; that stretch reads LRIDYENRLTRVGHAQIKEP.

It belongs to the SEDS family. FtsW subfamily.

It localises to the cell inner membrane. The enzyme catalyses [GlcNAc-(1-&gt;4)-Mur2Ac(oyl-L-Ala-gamma-D-Glu-L-Lys-D-Ala-D-Ala)](n)-di-trans,octa-cis-undecaprenyl diphosphate + beta-D-GlcNAc-(1-&gt;4)-Mur2Ac(oyl-L-Ala-gamma-D-Glu-L-Lys-D-Ala-D-Ala)-di-trans,octa-cis-undecaprenyl diphosphate = [GlcNAc-(1-&gt;4)-Mur2Ac(oyl-L-Ala-gamma-D-Glu-L-Lys-D-Ala-D-Ala)](n+1)-di-trans,octa-cis-undecaprenyl diphosphate + di-trans,octa-cis-undecaprenyl diphosphate + H(+). The protein operates within cell wall biogenesis; peptidoglycan biosynthesis. Functionally, peptidoglycan polymerase that is essential for cell division. The protein is Probable peptidoglycan glycosyltransferase FtsW of Haemophilus ducreyi (strain 35000HP / ATCC 700724).